A 742-amino-acid chain; its full sequence is MYTQTLYELSQEAERLLQLSRQQLQLLEKMPLSVPGDDAPQLALPWSQPNIAERHAMLNNELRKISRLEMVLAIVGTMKAGKSTTINAIVGTEVLPNRNRPMTALPTLIRHTPGQKEPVLHFSHVAPIDCLIQQLQQRLRDCDIKHLTDVLEIDKDMRALMQRIENGVAFEKYYLGAQPIFHCLKSLNDLVRLAKALDVDFPFSAYAAIEHIPVIEVEFVHLAGLESYPGQLTLLDTPGPNEAGQPHLQKMLNQQLARASAVLAVLDYTQLKSISDEEVREAILAVGQSVPLYVLVNKFDQQDRNSDDADQVRALISGTLMKGCITPQQIFPVSSMWGYLANRARHELANNGKLPAPEQQRWVEDFAHAALGRRWRHADLADLEHIRHAADQLWEDSLFAQPIQALLHAAYANASLYALRSAAHKLLNYAQQAREYLDFRAHGLNVACEQLRQNIHQVEESLQLLQLNQAQVSGEIKHEIELALTSANHFLRQQQDALNAQLAALFQDDSEPLSEMRTRCETLLQTAQNTISRDFTLRFAELESTLCRVLTDVIRPIEQQVKMELSESGFRPGFHFPVFHGVVPHFNTRQLFSAVISRQDATDEQSTRLGVVRETFSRWLNQPDWGRGNEKSPTETVDYSVLQRALSAEVDLYCQQMAKVLAEQVDESVTAGMNTFFAEFASCLTELQTRLRESLALRQQNESVVRLMQQQLQQTVMTHGWIYTDAQLLRDDIQTLFTAERY.

The segment at Gln-41–Pro-45 is clamp-binding consensus. In terms of domain architecture, Dynamin-type G spans Ser-66–Pro-402. The segment at Gly-76–Ser-83 is G1 motif. Positions Met-102–Ala-104 are G2 motif. The tract at residues Asp-236–Gly-239 is G3 motif. The G4 motif stretch occupies residues Asn-297–Asp-300. The interval Phe-331 to Ser-334 is G5 motif. The stretch at Arg-440 to Val-472 forms a coiled coil.

This sequence belongs to the TRAFAC class dynamin-like GTPase superfamily. Dynamin/Fzo/YdjA family. In terms of assembly, forms homooligomers. Binds to the beta sliding clamp processivity factor (DnaN) in the presence and absence of DNA, may bind to the clamp itself as homodimers or trimers. Homooligomers may be able to bind more than 1 clamp complex.

The protein resides in the cytoplasm. In terms of biological role, important for the colocalization of sister nascent DNA strands after replication fork passage during DNA replication, and for positioning and subsequent partitioning of sister chromosomes. Does not have GTPase activity on its own. This is Clamp-binding protein CrfC (crfC) from Escherichia coli.